Consider the following 713-residue polypeptide: MKTVTLATCNLNQWAMDFKGNLERIIESINIAKSKGAKYRLGPELEICGYGCEDHFLEQDTMLHCWQSLAVILKDPELTKDILVDVGMPVLHKDVRYNCRVILLNQKIYLIQPKKAMAMDGNYREGRWFTPWIKPRVVETFYLPRIISQITGQDECQIGDAIISTLDTAISSETCEELFTPNSPHIQMGLDGVEIFTNGSGSHHQLRKLDTRVDLIRSATSKSGGIYLYSNQQGCDGSRLYYDGSCMIMINGDCVSQGSQFSLVDIEVITATVDLEDVRSVRASFMARCAQANLTKEFPRVRCPIQLTHIDYCHPPDRVIHINYNTPAEEIGFGPACWLWDYLRRSGLSGYFLPLSGGADSAATAAIIGIMCQLVILDVSKGNKQVLKDAQRITNSPEDYIPTDSREFASRLFFTAYLGSKNSSKETRDRAMEIAKDIGSVHKEVDIDDISQSFNDAFSQITKKQPQFRAHGGTPRENLALQNVQARTRMVLSYHLASLLLWEQGRPGSLLVLGSANCDESLRGYMTKYDCSSADINPIGGMSKIDLRSFIEWAGKFRDMKSILSVLTATPTAELEPITENYTQSDEIDMGMTYEELSIFGKLRKVNRCGPVSMFERLVADWAHLEPSVVAEKVKRFFYYYAINRHKLTTLTPSYHAEGYSPDDNRYDHRQFLYNSKWDVQFETIDKIVLRLSQRPQLKNTVNCPNQASLTQQ.

The 272-residue stretch at V4–L275 folds into the CN hydrolase domain. Catalysis depends on E44, which acts as the Proton acceptor; for glutaminase activity. K114 serves as the catalytic For glutaminase activity. C175 serves as the catalytic Nucleophile; for glutaminase activity. Residues Y324–N703 form a ligase region. P354–S361 contacts ATP. Residue S356 is part of the active site.

The protein in the C-terminal section; belongs to the NAD synthetase family.

The enzyme catalyses deamido-NAD(+) + L-glutamine + ATP + H2O = L-glutamate + AMP + diphosphate + NAD(+) + H(+). Its pathway is cofactor biosynthesis; NAD(+) biosynthesis; NAD(+) from deamido-NAD(+) (L-Gln route): step 1/1. This is Glutamine-dependent NAD(+) synthetase (nadsyn1) from Dictyostelium discoideum (Social amoeba).